Reading from the N-terminus, the 156-residue chain is MDIRKIKKLIELVEESGISELEISEGEESVRISRAAPAASFPVMQQAYAAPMMQQPAQSNAAAPATVPSMEAPAAAEISGHIVRSPMVGTFYRTPSPDAKAFIEVGQKVNVGDTLCIVEAMKMMNQIEADKSGTVKAILVESGQPVEFDEPLVVIE.

Positions 73–156 (PAAAEISGHI…EFDEPLVVIE (84 aa)) constitute a Biotinyl-binding domain. An N6-biotinyllysine modification is found at Lys122.

Homodimer.

It functions in the pathway lipid metabolism; fatty acid biosynthesis. Functionally, this protein is a component of the acetyl coenzyme A carboxylase complex; first, biotin carboxylase catalyzes the carboxylation of the carrier protein and then the transcarboxylase transfers the carboxyl group to form malonyl-CoA. The polypeptide is Biotin carboxyl carrier protein of acetyl-CoA carboxylase (accB) (Escherichia coli O6:H1 (strain CFT073 / ATCC 700928 / UPEC)).